Here is a 403-residue protein sequence, read N- to C-terminus: MLKKLKNFILFSSIFSPIAFAISCSNTGVVKQEDVSVSQGQWDKSITFGVSEAWLNKKKGGEKVNKEVINTFLENFKKEFNKLKNANDKTKNFDDVDFKVTPIQDFTVLLNNLSTDNPELDFGINASGKLVEFLKNNPGIITPALETTTNSFVFDKEKDKFYVDGTDSDPLVKIAKEINKIFVETPYASWTDENHKWNGNVYQSVYDPTVQANFYRGMIWIKGNDETLAKIKKAWNDKDWNTFRNFGILHGKDNSFSKFKLEETILKNHFQNKFTTLNEDRSAHPNAYKQKSADTLGTLDDFHIAFSEEGSFAWTHNKSATKPFETKANEKMEALIVTNPIPYDVGVFRKSVNQLEQNLIVQTFINLAKNKQDTYGPLLGYNGYKKIDNFQKEIVEVYEKAIK.

Positions 1–23 are cleaved as a signal peptide; sequence MLKKLKNFILFSSIFSPIAFAIS. Cys24 is lipidated: N-palmitoyl cysteine. A lipid anchor (S-diacylglycerol cysteine) is attached at Cys24.

The protein resides in the cell membrane. P37 is part of a high-affinity transport system. The sequence is that of High affinity transport system protein p37 (p37) from Mesomycoplasma hyorhinis (Mycoplasma hyorhinis).